The chain runs to 192 residues: Probable GTP-binding protein EngB (192 aa).

The EngB-type G domain maps to 22–192 (GRPEIVFVGR…LLASIDTFTQ (171 aa)). Residues 30–37 (GRSNVGKS), 57–61 (GKTRL), 75–78 (DLPG), 142–145 (TKWD), and 172–174 (YSS) contribute to the GTP site. Positions 37 and 59 each coordinate Mg(2+).

Belongs to the TRAFAC class TrmE-Era-EngA-EngB-Septin-like GTPase superfamily. EngB GTPase family. Requires Mg(2+) as cofactor.

Necessary for normal cell division and for the maintenance of normal septation. The sequence is that of Probable GTP-binding protein EngB from Chlorobaculum tepidum (strain ATCC 49652 / DSM 12025 / NBRC 103806 / TLS) (Chlorobium tepidum).